The chain runs to 142 residues: Large ribosomal subunit protein uL11 (142 aa).

Belongs to the universal ribosomal protein uL11 family. As to quaternary structure, part of the ribosomal stalk of the 50S ribosomal subunit. Interacts with L10 and the large rRNA to form the base of the stalk. L10 forms an elongated spine to which L12 dimers bind in a sequential fashion forming a multimeric L10(L12)X complex. Post-translationally, one or more lysine residues are methylated.

In terms of biological role, forms part of the ribosomal stalk which helps the ribosome interact with GTP-bound translation factors. The polypeptide is Large ribosomal subunit protein uL11 (Sinorhizobium fredii (strain NBRC 101917 / NGR234)).